The sequence spans 239 residues: MNKNIVIKSMAALAILTSVTGINAAVVEETQQIANAEKNVTQVKDTNNFPYNGVVSFKDATGFVIGKNTIITNKHVSKDYKVGDRITAHPNGDKGNGGIYKIKSISDYPGDEDISVMNIEEQAVERGPKGFNFNENVQAFNFAKDAKVDDKIKVIGYPLPAQNSFKQFESTGTIKRIKDNILNFDAYIEPGNSGSPVLNSNNEVIGVVYGGIGKIGSEYNGAVYFTPQIKDFIQKHIEQ.

The first 36 residues, 1–36 (MNKNIVIKSMAALAILTSVTGINAAVVEETQQIANA), serve as a signal peptide directing secretion. Catalysis depends on charge relay system residues histidine 75, aspartate 113, and serine 193.

It belongs to the peptidase S1B family.

The protein localises to the secreted. This chain is Serine protease SplC (splC), found in Staphylococcus aureus.